Reading from the N-terminus, the 22-residue chain is Unknown protein from spot 168 of 2D-PAGE of etiolated coleoptile (22 aa).

This Zea mays (Maize) protein is Unknown protein from spot 168 of 2D-PAGE of etiolated coleoptile.